The following is a 491-amino-acid chain: F-box/LRR-repeat protein 7 (491 aa).

A disordered region spans residues 1 to 79 (MGANNGKQYG…GRGSSTSSSS (79 aa)). The segment covering 10–26 (GSEGKGSSSISSDVSSS) has biased composition (low complexity). Residues 27 to 55 (TDHTPTKAQKNVATSEDSDLSMRTLSTPS) are compositionally biased toward polar residues. The region spanning 111 to 157 (QASIDRLPDHSMVQIFSFLPTNQLCRCARVCRRWYNLAWDPRLWRTI) is the F-box domain. 11 LRR repeats span residues 170–195 (LKVL…TVSG), 196–221 (CRRL…EVSG), 222–247 (CYNI…DVSG), 253–281 (CISL…DMTD), 282–307 (CFVL…YLRR), 308–333 (CVRL…SVSD), 334–359 (CRFV…SIAH), 360–385 (CGRV…NARG), 386–411 (CEGI…DIGK), 412–437 (CPLV…SLKS), and 438–463 (CESI…NVQD).

The protein belongs to the FBXL7 family. Part of the SCF (SKP1-CUL1-F-box) E3 ubiquitin-protein ligase complex SCF(FBXL7) composed of CUL1, SKP1, RBX1 and FBXL7. Interacts with AURKA; interaction takes place during mitosis but not in interphase. Interacts with BIRC5; this interaction allows BIRC5 to be polyubiquitinated by the SCF(FBXL7) E3 ubiquitin-protein ligase complex.

It localises to the cytoplasm. It is found in the cytoskeleton. Its subcellular location is the microtubule organizing center. The protein localises to the centrosome. Its pathway is protein modification; protein ubiquitination. Its function is as follows. Substrate recognition component of a SCF (SKP1-CUL1-F-box protein) E3 ubiquitin-protein ligase complex. During mitosis, it mediates the ubiquitination and subsequent proteasomal degradation of AURKA, causing mitotic arrest. It also regulates mitochondrial function by mediating the ubiquitination and proteasomal degradation of the apoptosis inhibitor BIRC5. The polypeptide is F-box/LRR-repeat protein 7 (FBXL7) (Homo sapiens (Human)).